The chain runs to 978 residues: Probable serine/threonine-protein kinase PLK (978 aa).

Low complexity predominate over residues 19–36 (IQIQQQQFKQPQQQPQQK). 2 disordered regions span residues 19–66 (IQIQ…SSIH) and 121–143 (QQQQ…NEPQ). The span at 37–53 (SNSCFSDQENYPANIQP) shows a compositional bias: polar residues. The segment covering 54 to 64 (SSSTSSSSSSS) has biased composition (low complexity). A Protein kinase domain is found at 163 to 416 (YRQGEFLGKG…LTQILEHDFF (254 aa)). Residues 169 to 177 (LGKGGFAKC) and lysine 192 contribute to the ATP site. Catalysis depends on aspartate 286, which acts as the Proton acceptor. Disordered regions lie at residues 463–554 (GTTS…FANL) and 601–638 (ENQQ…TVTT). Low complexity-rich tracts occupy residues 473–492 (HHYQ…NYQQ) and 500–549 (INNM…NINN). 2 coiled-coil regions span residues 497-555 (KKQI…ANLS) and 592-630 (IKQQ…INNN). Residues 696-780 (YISQYADFTN…IKYFLNHFTN (85 aa)) form the POLO box 1 domain. The interval 798–819 (NNNNNNNVENVTNNNNNNSNNS) is disordered. Positions 826 to 904 (YVKKWIKFDN…IYGTLSNNLY (79 aa)) constitute a POLO box 2 domain. A disordered region spans residues 908–978 (PESSFQQLPQ…SIPQPQLINQ (71 aa)). Positions 913 to 978 (QQLPQQQYQQ…SIPQPQLINQ (66 aa)) are enriched in low complexity.

The protein belongs to the protein kinase superfamily. Ser/Thr protein kinase family. CDC5/Polo subfamily.

The catalysed reaction is L-seryl-[protein] + ATP = O-phospho-L-seryl-[protein] + ADP + H(+). The enzyme catalyses L-threonyl-[protein] + ATP = O-phospho-L-threonyl-[protein] + ADP + H(+). This Dictyostelium discoideum (Social amoeba) protein is Probable serine/threonine-protein kinase PLK (PLK).